The following is a 339-amino-acid chain: 5-dehydro-2-deoxygluconokinase (339 aa).

This sequence belongs to the carbohydrate kinase PfkB family.

The catalysed reaction is 5-dehydro-2-deoxy-D-gluconate + ATP = 6-phospho-5-dehydro-2-deoxy-D-gluconate + ADP + H(+). It participates in polyol metabolism; myo-inositol degradation into acetyl-CoA; acetyl-CoA from myo-inositol: step 5/7. Catalyzes the phosphorylation of 5-dehydro-2-deoxy-D-gluconate (2-deoxy-5-keto-D-gluconate or DKG) to 6-phospho-5-dehydro-2-deoxy-D-gluconate (DKGP). The chain is 5-dehydro-2-deoxygluconokinase from Clostridium botulinum (strain Eklund 17B / Type B).